A 216-amino-acid chain; its full sequence is FMN-dependent NADH:quinone oxidoreductase 2 (216 aa).

Residues serine 9, 15-17, 96-99, and 140-143 each bind FMN; these read SVS, MYNF, and SRGG.

It belongs to the azoreductase type 1 family. As to quaternary structure, homodimer. FMN is required as a cofactor.

It catalyses the reaction 2 a quinone + NADH + H(+) = 2 a 1,4-benzosemiquinone + NAD(+). It carries out the reaction N,N-dimethyl-1,4-phenylenediamine + anthranilate + 2 NAD(+) = 2-(4-dimethylaminophenyl)diazenylbenzoate + 2 NADH + 2 H(+). Functionally, quinone reductase that provides resistance to thiol-specific stress caused by electrophilic quinones. Its function is as follows. Also exhibits azoreductase activity. Catalyzes the reductive cleavage of the azo bond in aromatic azo compounds to the corresponding amines. The protein is FMN-dependent NADH:quinone oxidoreductase 2 of Xanthomonas euvesicatoria pv. vesicatoria (strain 85-10) (Xanthomonas campestris pv. vesicatoria).